Here is a 114-residue protein sequence, read N- to C-terminus: Putative protein TfaS (114 aa).

Belongs to the tfa family.

This Escherichia coli (strain K12) protein is Putative protein TfaS (tfaS).